Here is a 450-residue protein sequence, read N- to C-terminus: tRNA modification GTPase MnmE (450 aa).

(6S)-5-formyl-5,6,7,8-tetrahydrofolate contacts are provided by lysine 21, glutamate 78, and lysine 117. A TrmE-type G domain is found at 213-376 (GHALSIVGKP…LSQKISAFFP (164 aa)). Asparagine 223 provides a ligand contact to K(+). Residues 223–228 (NAGKSS), 242–248 (SDIKGTT), and 267–270 (DTAG) contribute to the GTP site. Serine 227 provides a ligand contact to Mg(2+). Serine 242, isoleucine 244, and threonine 247 together coordinate K(+). Threonine 248 contacts Mg(2+). Position 450 (lysine 450) interacts with (6S)-5-formyl-5,6,7,8-tetrahydrofolate.

It belongs to the TRAFAC class TrmE-Era-EngA-EngB-Septin-like GTPase superfamily. TrmE GTPase family. As to quaternary structure, homodimer. Heterotetramer of two MnmE and two MnmG subunits. It depends on K(+) as a cofactor.

It is found in the cytoplasm. In terms of biological role, exhibits a very high intrinsic GTPase hydrolysis rate. Involved in the addition of a carboxymethylaminomethyl (cmnm) group at the wobble position (U34) of certain tRNAs, forming tRNA-cmnm(5)s(2)U34. This chain is tRNA modification GTPase MnmE, found in Helicobacter pylori (strain Shi470).